Here is a 917-residue protein sequence, read N- to C-terminus: Intercellular adhesion molecule 5 (917 aa).

The signal sequence occupies residues methionine 1–leucine 31. Topologically, residues glutamate 32 to tryptophan 833 are extracellular. Ig-like C2-type domains are found at residues glycine 48–serine 130, glycine 135–alanine 235, aspartate 242–leucine 329, glycine 337–leucine 402, proline 408–threonine 486, proline 491–threonine 567, proline 572–glycine 651, proline 665–threonine 738, and proline 745–arginine 828. An N-linked (GlcNAc...) (high mannose) asparagine glycan is attached at asparagine 54. 2 cysteine pairs are disulfide-bonded: cysteine 55/cysteine 99 and cysteine 59/cysteine 103. N-linked (GlcNAc...) asparagine glycans are attached at residues asparagine 74 and asparagine 137. A disulfide bond links cysteine 142 and cysteine 198. Position 182 is a phosphothreonine (threonine 182). Residues asparagine 195, asparagine 214, asparagine 274, asparagine 316, asparagine 371, and asparagine 397 are each glycosylated (N-linked (GlcNAc...) asparagine). A disulfide bridge connects residues cysteine 249 and cysteine 302. A disulfide bridge links cysteine 344 with cysteine 383. Cystine bridges form between cysteine 415-cysteine 470, cysteine 498-cysteine 551, and cysteine 579-cysteine 644. Residues asparagine 582 and asparagine 645 are each glycosylated (N-linked (GlcNAc...) asparagine). The cysteines at positions 672 and 724 are disulfide-linked. N-linked (GlcNAc...) asparagine glycosylation is found at asparagine 762, asparagine 793, and asparagine 794. A disulfide bond links cysteine 767 and cysteine 812. Residues leucine 834–leucine 854 traverse the membrane as a helical segment. Topologically, residues alanine 855 to serine 917 are cytoplasmic. Over residues glycine 884–glycine 893 the composition is skewed to gly residues. A disordered region spans residues glycine 884–glutamate 908.

Belongs to the immunoglobulin superfamily. ICAM family. Post-translationally, glycosylation at Asn-54 is critical for functional folding. In terms of tissue distribution, expressed on neurons in the most rostral segment of the mammalian brain, the telencephalon.

It localises to the membrane. Its function is as follows. ICAM proteins are ligands for the leukocyte adhesion protein LFA-1 (integrin alpha-L/beta-2). The protein is Intercellular adhesion molecule 5 (Icam5) of Mus musculus (Mouse).